We begin with the raw amino-acid sequence, 488 residues long: Aspartyl/glutamyl-tRNA(Asn/Gln) amidotransferase subunit B (488 aa).

This sequence belongs to the GatB/GatE family. GatB subfamily. Heterotrimer of A, B and C subunits.

The enzyme catalyses L-glutamyl-tRNA(Gln) + L-glutamine + ATP + H2O = L-glutaminyl-tRNA(Gln) + L-glutamate + ADP + phosphate + H(+). The catalysed reaction is L-aspartyl-tRNA(Asn) + L-glutamine + ATP + H2O = L-asparaginyl-tRNA(Asn) + L-glutamate + ADP + phosphate + 2 H(+). Allows the formation of correctly charged Asn-tRNA(Asn) or Gln-tRNA(Gln) through the transamidation of misacylated Asp-tRNA(Asn) or Glu-tRNA(Gln) in organisms which lack either or both of asparaginyl-tRNA or glutaminyl-tRNA synthetases. The reaction takes place in the presence of glutamine and ATP through an activated phospho-Asp-tRNA(Asn) or phospho-Glu-tRNA(Gln). This chain is Aspartyl/glutamyl-tRNA(Asn/Gln) amidotransferase subunit B, found in Neorickettsia sennetsu (strain ATCC VR-367 / Miyayama) (Ehrlichia sennetsu).